A 2471-amino-acid chain; its full sequence is Probable polyketide synthase 24 (2471 aa).

The Ketosynthase family 3 (KS3) domain maps to 21-449 (ENLVAIVGVG…GSNCCLVLSQ (429 aa)). Catalysis depends on for beta-ketoacyl synthase activity residues Cys190, His332, and His372. Residues 654–687 (GIKASFMLGHSLGEVTTAYCSGMIDIDQLCYLIY) are acyl/malonyl transferase. Ser664 acts as the For acyl/malonyl transferase activity in catalysis. The interval 953 to 1075 (ISILGNSMQD…SNFHLNSNDN (123 aa)) is N-terminal hotdog fold. The PKS/mFAS DH domain occupies 953 to 1245 (ISILGNSMQD…VKSLTPVKDP (293 aa)). His987 serves as the catalytic Proton acceptor; for dehydratase activity. The segment at 1094-1245 (NLSSIPWDEF…VKSLTPVKDP (152 aa)) is C-terminal hotdog fold. Asp1157 acts as the Proton donor; for dehydratase activity in catalysis. Positions 1426 to 1469 (IINEQQQQQQQQQQQQQQQQQQQQQLLNNENNKESLKNLLVNCN) form a coiled coil. Positions 2336-2413 (SSSTNVKNKF…MVYQIINDSL (78 aa)) constitute a Carrier domain. Ser2373 carries the post-translational modification O-(pantetheine 4'-phosphoryl)serine.

The cofactor is pantetheine 4'-phosphate.

Its function is as follows. Probable polyketide synthase. This chain is Probable polyketide synthase 24 (pks24), found in Dictyostelium discoideum (Social amoeba).